A 182-amino-acid polypeptide reads, in one-letter code: Protein GrpE (182 aa).

Basic and acidic residues predominate over residues 1-17 (MEEKKRCEESEKIKEQE). The tract at residues 1-33 (MEEKKRCEESEKIKEQENETLPNEDSPSMGKKV) is disordered.

It belongs to the GrpE family. Homodimer.

It is found in the cytoplasm. In terms of biological role, participates actively in the response to hyperosmotic and heat shock by preventing the aggregation of stress-denatured proteins, in association with DnaK and GrpE. It is the nucleotide exchange factor for DnaK and may function as a thermosensor. Unfolded proteins bind initially to DnaJ; upon interaction with the DnaJ-bound protein, DnaK hydrolyzes its bound ATP, resulting in the formation of a stable complex. GrpE releases ADP from DnaK; ATP binding to DnaK triggers the release of the substrate protein, thus completing the reaction cycle. Several rounds of ATP-dependent interactions between DnaJ, DnaK and GrpE are required for fully efficient folding. This chain is Protein GrpE, found in Borrelia hermsii (strain HS1 / DAH).